The sequence spans 83 residues: Small ribosomal subunit protein eS21 (83 aa).

It belongs to the eukaryotic ribosomal protein eS21 family. Component of the 40S small ribosomal subunit.

The protein resides in the cytoplasm. Its subcellular location is the cytosol. It localises to the rough endoplasmic reticulum. The polypeptide is Small ribosomal subunit protein eS21 (RpS21) (Agriotes lineatus (Lined click beetle)).